Here is a 256-residue protein sequence, read N- to C-terminus: Thiazole synthase (256 aa).

Lys-95 functions as the Schiff-base intermediate with DXP in the catalytic mechanism. 1-deoxy-D-xylulose 5-phosphate-binding positions include Gly-156, 182-183, and 204-205; these read AG and NT.

Belongs to the ThiG family. In terms of assembly, homotetramer. Forms heterodimers with either ThiH or ThiS.

The protein localises to the cytoplasm. It catalyses the reaction [ThiS sulfur-carrier protein]-C-terminal-Gly-aminoethanethioate + 2-iminoacetate + 1-deoxy-D-xylulose 5-phosphate = [ThiS sulfur-carrier protein]-C-terminal Gly-Gly + 2-[(2R,5Z)-2-carboxy-4-methylthiazol-5(2H)-ylidene]ethyl phosphate + 2 H2O + H(+). It functions in the pathway cofactor biosynthesis; thiamine diphosphate biosynthesis. Catalyzes the rearrangement of 1-deoxy-D-xylulose 5-phosphate (DXP) to produce the thiazole phosphate moiety of thiamine. Sulfur is provided by the thiocarboxylate moiety of the carrier protein ThiS. In vitro, sulfur can be provided by H(2)S. In Escherichia coli O81 (strain ED1a), this protein is Thiazole synthase.